The chain runs to 497 residues: Glycogen synthase (497 aa).

ADP-alpha-D-glucose is bound at residue Lys15.

Belongs to the glycosyltransferase 1 family. Bacterial/plant glycogen synthase subfamily.

It carries out the reaction [(1-&gt;4)-alpha-D-glucosyl](n) + ADP-alpha-D-glucose = [(1-&gt;4)-alpha-D-glucosyl](n+1) + ADP + H(+). Its pathway is glycan biosynthesis; glycogen biosynthesis. Functionally, synthesizes alpha-1,4-glucan chains using ADP-glucose. The sequence is that of Glycogen synthase from Thermodesulfovibrio yellowstonii (strain ATCC 51303 / DSM 11347 / YP87).